The following is a 157-amino-acid chain: 6,7-dimethyl-8-ribityllumazine synthase (157 aa).

5-amino-6-(D-ribitylamino)uracil is bound by residues Phe-23, 57-59, and 81-83; these read AFE and AVI. 86-87 contacts (2S)-2-hydroxy-3-oxobutyl phosphate; that stretch reads AT. His-89 serves as the catalytic Proton donor. Residue Phe-114 participates in 5-amino-6-(D-ribitylamino)uracil binding. A (2S)-2-hydroxy-3-oxobutyl phosphate-binding site is contributed by Arg-128.

It belongs to the DMRL synthase family.

The enzyme catalyses (2S)-2-hydroxy-3-oxobutyl phosphate + 5-amino-6-(D-ribitylamino)uracil = 6,7-dimethyl-8-(1-D-ribityl)lumazine + phosphate + 2 H2O + H(+). It participates in cofactor biosynthesis; riboflavin biosynthesis; riboflavin from 2-hydroxy-3-oxobutyl phosphate and 5-amino-6-(D-ribitylamino)uracil: step 1/2. Its function is as follows. Catalyzes the formation of 6,7-dimethyl-8-ribityllumazine by condensation of 5-amino-6-(D-ribitylamino)uracil with 3,4-dihydroxy-2-butanone 4-phosphate. This is the penultimate step in the biosynthesis of riboflavin. The polypeptide is 6,7-dimethyl-8-ribityllumazine synthase (Desulforapulum autotrophicum (strain ATCC 43914 / DSM 3382 / VKM B-1955 / HRM2) (Desulfobacterium autotrophicum)).